The following is a 207-amino-acid chain: Large ribosomal subunit protein bL25 (207 aa).

The tract at residues 171–207 (EEETVVTVSAPRAEEEPTTTEAPEPEAVHGKDEEPVE) is disordered. Residues 196–207 (EAVHGKDEEPVE) are compositionally biased toward basic and acidic residues.

Belongs to the bacterial ribosomal protein bL25 family. CTC subfamily. As to quaternary structure, part of the 50S ribosomal subunit; part of the 5S rRNA/L5/L18/L25 subcomplex. Contacts the 5S rRNA. Binds to the 5S rRNA independently of L5 and L18.

This is one of the proteins that binds to the 5S RNA in the ribosome where it forms part of the central protuberance. The sequence is that of Large ribosomal subunit protein bL25 from Listeria monocytogenes serotype 4b (strain F2365).